Reading from the N-terminus, the 104-residue chain is Large ribosomal subunit protein uL24 (104 aa).

The protein belongs to the universal ribosomal protein uL24 family. Part of the 50S ribosomal subunit.

Its function is as follows. One of two assembly initiator proteins, it binds directly to the 5'-end of the 23S rRNA, where it nucleates assembly of the 50S subunit. One of the proteins that surrounds the polypeptide exit tunnel on the outside of the subunit. This Nitrobacter hamburgensis (strain DSM 10229 / NCIMB 13809 / X14) protein is Large ribosomal subunit protein uL24.